Here is a 362-residue protein sequence, read N- to C-terminus: UDP-arabinopyranose mutase 3 (362 aa).

The DXD motif motif lies at Asp-106–Asp-108. The N-linked (Glc...) arginine glycan is linked to Arg-154.

This sequence belongs to the RGP family. Heterodimer with RGP1. Requires Mn(2+) as cofactor. Mg(2+) serves as cofactor. In terms of processing, reversibly glycosylated in vitro by UDP-glucose, UDP-xylose and UDP-galactose, but not UDP-mannose. In terms of tissue distribution, specifically expressed in developing seeds.

The protein resides in the cytoplasm. The protein localises to the cytosol. Its subcellular location is the golgi apparatus. The catalysed reaction is UDP-beta-L-arabinofuranose = UDP-beta-L-arabinopyranose. UDP-L-arabinose mutase involved in the biosynthesis of cell wall non-cellulosic polysaccharides. Catalyzes the interconvertion of UDP-L-arabinopyranose (UDP-Arap) and UDP-L-arabinofuranose (UDP-Araf). Preferentially catalyzes the formation of UDP-Arap from UDP-Araf. At thermodynamic equilibrium in vitro the ratio of the pyranose form over the furanose form is 95:5. Is not active on other UDP-sugars (UDP-Gal, UDP-Xyl, UDP-Glc, GDP-Man and GDP-Fuc). Is probably active as heteromer in vivo. This chain is UDP-arabinopyranose mutase 3, found in Arabidopsis thaliana (Mouse-ear cress).